Here is a 457-residue protein sequence, read N- to C-terminus: MAVGGAGSSRSVAPCCCCAVLLAAALLFSAPATTEAYDALDPNGNITIKWDVMSWTPDGYVAVVTMFNYQQFRHIQAPGWQLGWTWAKKEVIWSMVGAQTTEQGDCSKFKGGTPHCCKKDPTVVDLLPGTPYNMQIANCCKAGVINTFNQDPSNAASSFQISVGLAGTTNKTVKLPKNFTLKAPGPGYTCGRAMIVRPTKFFTGDGRRATQALMTWNVTCTYSQFLAQKTPSCCVSLSSFYNDTIVNCPTCSCGCQNNGTSPGSCVNENSPYLQSAIDGPGKWTGQPLVQCTSHMCPIRIHWHVKLNYKEYWRVKITITNFNYRMNYTQWNLVAQHPNFNNITQLFSFNYKPLTPYGSKINDTAMFWGVKFYNDLLMQAGPLGNAQSELLLRKDSKDFTFDKGWAFPHRVYFNGDNCVMPPPDAYPWLPNASPLTKQPLTLSVLVFSIVLATLLAYA.

The signal sequence occupies residues 1–35; sequence MAVGGAGSSRSVAPCCCCAVLLAAALLFSAPATTE. 9 N-linked (GlcNAc...) asparagine glycosylation sites follow: N45, N170, N178, N217, N242, N258, N326, N341, and N361. A lipid anchor (GPI-anchor amidated asparagine) is attached at N430. Residues 431–457 constitute a propeptide, removed in mature form; it reads ASPLTKQPLTLSVLVFSIVLATLLAYA. A helical transmembrane segment spans residues 437-457; the sequence is QPLTLSVLVFSIVLATLLAYA.

This sequence belongs to the COBRA family.

It localises to the cell membrane. Its function is as follows. Involved in determining the orientation of cell expansion, probably by playing an important role in cellulose deposition. May act by recruiting cellulose synthesizing complexes to discrete positions on the cell surface. The sequence is that of COBRA-like protein 3 (BC1L4) from Oryza sativa subsp. japonica (Rice).